Reading from the N-terminus, the 404-residue chain is L-cysteine:1D-myo-inositol 2-amino-2-deoxy-alpha-D-glucopyranoside ligase (404 aa).

A Zn(2+)-binding site is contributed by C35. Residues C35 to T38, T50, and N73 to T75 each bind L-cysteinyl-5'-AMP. A 'HIGH' region motif is present at residues I37 to H47. Positions E178–P183 match the 'ERGGDP' region motif. Residue W219 coordinates L-cysteinyl-5'-AMP. Residue C223 participates in Zn(2+) binding. G241 to D243 serves as a coordination point for L-cysteinyl-5'-AMP. Residue H248 participates in Zn(2+) binding. I275 contributes to the L-cysteinyl-5'-AMP binding site. The 'KMSKS' region signature appears at K281–S285.

This sequence belongs to the class-I aminoacyl-tRNA synthetase family. MshC subfamily. Monomer. The cofactor is Zn(2+).

The enzyme catalyses 1D-myo-inositol 2-amino-2-deoxy-alpha-D-glucopyranoside + L-cysteine + ATP = 1D-myo-inositol 2-(L-cysteinylamino)-2-deoxy-alpha-D-glucopyranoside + AMP + diphosphate + H(+). Its function is as follows. Catalyzes the ATP-dependent condensation of GlcN-Ins and L-cysteine to form L-Cys-GlcN-Ins. The protein is L-cysteine:1D-myo-inositol 2-amino-2-deoxy-alpha-D-glucopyranoside ligase of Salinispora tropica (strain ATCC BAA-916 / DSM 44818 / JCM 13857 / NBRC 105044 / CNB-440).